A 286-amino-acid chain; its full sequence is MAIPFLHKGGSDDSTHHHTHDYDHHNHDHHGHDHHSHDSSSNSSSEAARLQFIQEHGHSHDAMETPGSYLKRELPQFNHRDFSRRAFTIGVGGPVGSGKTALLLQLCRLLGEKYSIGVVTNDIFTREDQEFLIRNKALPEERIRAIETGGCPHAAIREDVSGNLVALEELQSEFNTELLLVESGGDNLAANYSRDLADFIIYVIDVSGGDKIPRKGGPGITESDLLIINKTDLAKLVGADLSVMDRDAKKIRENGPIVFAQVKNQVGMDEITELILGAAKSAGALK.

The tract at residues 1–47 is disordered; that stretch reads MAIPFLHKGGSDDSTHHHTHDYDHHNHDHHGHDHHSHDSSSNSSSEA. Residues 9-26 show a composition bias toward basic and acidic residues; sequence GGSDDSTHHHTHDYDHHN. Residue 93 to 100 coordinates GTP; the sequence is GPVGSGKT.

Belongs to the SIMIBI class G3E GTPase family. UreG subfamily.

The protein localises to the cytoplasm. The protein resides in the nucleus. Probably facilitates nickel incorporation. This is an uncharacterized protein from Schizosaccharomyces pombe (strain 972 / ATCC 24843) (Fission yeast).